A 458-amino-acid chain; its full sequence is Tubulin beta chain (458 aa).

Residues glutamine 11, glutamate 69, serine 138, glycine 142, threonine 143, glycine 144, asparagine 204, and asparagine 226 each coordinate GTP. Glutamate 69 is a Mg(2+) binding site. A disordered region spans residues 426–458; sequence EAATVEGEEEEDEYAEGGVVNGDQSYDEPYQAA. Acidic residues predominate over residues 431–440; the sequence is EGEEEEDEYA.

Belongs to the tubulin family. As to quaternary structure, dimer of alpha and beta chains. A typical microtubule is a hollow water-filled tube with an outer diameter of 25 nm and an inner diameter of 15 nM. Alpha-beta heterodimers associate head-to-tail to form protofilaments running lengthwise along the microtubule wall with the beta-tubulin subunit facing the microtubule plus end conferring a structural polarity. Microtubules usually have 13 protofilaments but different protofilament numbers can be found in some organisms and specialized cells. The cofactor is Mg(2+).

It localises to the cytoplasm. The protein localises to the cytoskeleton. Its function is as follows. Tubulin is the major constituent of microtubules, a cylinder consisting of laterally associated linear protofilaments composed of alpha- and beta-tubulin heterodimers. Microtubules grow by the addition of GTP-tubulin dimers to the microtubule end, where a stabilizing cap forms. Below the cap, tubulin dimers are in GDP-bound state, owing to GTPase activity of alpha-tubulin. This Pyropia yezoensis (Susabi-nori) protein is Tubulin beta chain (TUBB1).